A 234-amino-acid polypeptide reads, in one-letter code: MGGCVGAQHDSSGSLNENSEGTGVALGRNQPLKKEKPKWKSDYPMTDGQLRSKRDEFWDTAPAFEGRKEIWDALKAAAHAFESNDHELAQAIIDGANITLPHGALTECYDELGNRYQLPVYCLAPPINMIEEKSDIETLDIPEPPPNSGYESQLRLRLSTGKDLKLVVRSTDTVYHMKRRLHAAEGVEPASQRWFFSGRPLTDKMRLEELKIPKDYVVQVIMSQPLQNPTPVEN.

Residues 1 to 46 are disordered; the sequence is MGGCVGAQHDSSGSLNENSEGTGVALGRNQPLKKEKPKWKSDYPMT. Polar residues predominate over residues 9–21; that stretch reads HDSSGSLNENSEG. Residues 32 to 41 are compositionally biased toward basic and acidic residues; the sequence is LKKEKPKWKS. The Ubiquitin-like domain maps to 152-227; it reads SQLRLRLSTG…VQVIMSQPLQ (76 aa).

Its subcellular location is the cytoplasm. The sequence is that of Ubiquitin domain-containing protein 2 (UBTD2) from Bos taurus (Bovine).